We begin with the raw amino-acid sequence, 996 residues long: Phototropin-1 (996 aa).

The tract at residues 1–184 (MEPTEKPSTK…PGGRSGIPRV (184 aa)) is disordered. 2 positions are modified to phosphoserine: serine 23 and serine 58. The segment covering 49–59 (QNLSDPRGTSP) has biased composition (polar residues). The segment covering 60-70 (QPRPQQEPAPS) has biased composition (pro residues). Positions 141 to 153 (SGGTENDPNGKKT) are enriched in polar residues. Positions 155 to 166 (SQRNSQNSCRSS) are enriched in low complexity. The 74-residue stretch at 184–257 (VSEDLKDALS…AKIRETLAAG (74 aa)) folds into the PAS 1 domain. Serine 185 carries the post-translational modification Phosphoserine. An FMN-binding site is contributed by asparagine 233. S-4a-FMN cysteine is present on cysteine 234. Positions 235, 238, 251, 266, 276, 297, and 302 each coordinate FMN. Residues 258 to 312 (NNYCGRILNYKKDGTSFWNLLTIAPIKDESGKVLKFIGMQVEVSKHTEGAKEKAL) form the PAC 1 domain. Phosphoserine is present on residues serine 350, serine 376, and serine 410. Disordered regions lie at residues 351–413 (ESTN…SLSF) and 434–453 (YGEE…SVDD). The segment covering 434–443 (YGEEDDEISD) has biased composition (acidic residues). Basic and acidic residues predominate over residues 444–453 (RDERPESVDD). Serine 450 is modified (phosphoserine). The region spanning 462-535 (KGIDLATTLE…KKIRNAIDNQ (74 aa)) is the PAS 2 domain. FMN is bound at residue asparagine 511. An S-4a-FMN cysteine modification is found at cysteine 512. FMN is bound by residues arginine 513, glutamine 516, arginine 529, asparagine 544, asparagine 554, phenylalanine 556, and glutamine 575. Positions 536-590 (TEVTVQLINYTKSGKKFWNIFHLQPMRDQKGEVQYFIGVQLDGSKHVEPVRNVIE) constitute a PAC 2 domain. Positions 663–952 (FKPVKPLGSG…ANEVKQHSFF (290 aa)) constitute a Protein kinase domain. Residues 669-677 (LGSGDTGSV) and lysine 692 contribute to the ATP site. Aspartate 788 functions as the Proton acceptor in the catalytic mechanism. Residues 806-862 (DFDLSCLTSCKPQLLIPSIDEKKKKKQQKSQQTPIFMAEPMRASNSFVGTEEYIAPE) form an activation loop region.

Belongs to the protein kinase superfamily. AGC Ser/Thr protein kinase family. As to quaternary structure, homodimer; disulfide-linked. Interacts with PKS1, PKS2, RPT2, RPT3, PHOT2 and BLUS1. Subunit of a complex made of CAR6, PHOT1 and RPT3/NPH3. Associates with CBC1 and CBC2. Binds to BHP. Requires FMN as cofactor. Autophosphorylated at Ser-185, Ser-350 and Ser-410 in response to blue light irradiation. In terms of processing, 2 molecules of FMN bind covalently to cysteines after exposure to blue light and are reversed in the dark. As to expression, present in guard cells (at protein level).

The protein localises to the cell membrane. The protein resides in the cytoplasm. The catalysed reaction is L-seryl-[protein] + ATP = O-phospho-L-seryl-[protein] + ADP + H(+). The enzyme catalyses L-threonyl-[protein] + ATP = O-phospho-L-threonyl-[protein] + ADP + H(+). With respect to regulation, autophosphorylation is inhibited by staurosporine, but not by tyrphostin 9, sphingosine, GW5074 and BML-265. In terms of biological role, protein kinase that acts as a blue light (BL) photoreceptor in a signal-transduction pathway for photo-induced movements. Triggers the phosphorylation of AHA1 and AHA2 C-terminal penultimate Thr in guard cells to activate them and induce stomatal opening in response to blue light (BL). Also phosphorylates BLUS1, a kinase involved in stomatal opening. Mediates the phosphorylation of CBC1 in stomata, but not of CBC2, in response to blue light. Required for blue light mediated mRNA destabilization. Mediates calcium spiking of extracellular origin in response to a low rate of blue light. Also mediates rapid membrane depolarization and growth inhibition in response to blue light. Necessary for root phototropism. Involved in hypocotyl phototropism under a low rate but not under a high rate of blue light. Contributes to the chloroplast accumulation but seems not to be required for chloroplast translocation. Regulates stomata opening and photomorphogenesis response of leaf tissue. Confers sensitivity to drought. Not involved in hypocotyl elongation inhibition, anthocyanin accumulation or cotyledon opening. Involved in the regulation of leaf position and morphology via the phosphorylation of ABCB19 during blue light responses to modulate auxin distribution. This is Phototropin-1 from Arabidopsis thaliana (Mouse-ear cress).